Reading from the N-terminus, the 427-residue chain is Glucose-1-phosphate adenylyltransferase (427 aa).

Positions 40, 46, and 52 each coordinate AMP. An alpha-D-glucose 1-phosphate-binding site is contributed by Tyr-114. Arg-130 serves as a coordination point for AMP. Alpha-D-glucose 1-phosphate-binding positions include Gly-179, 194-195, and Ser-212; that span reads EK. Arg-386 lines the AMP pocket.

This sequence belongs to the bacterial/plant glucose-1-phosphate adenylyltransferase family. In terms of assembly, homotetramer.

It carries out the reaction alpha-D-glucose 1-phosphate + ATP + H(+) = ADP-alpha-D-glucose + diphosphate. Its pathway is glycan biosynthesis; glycogen biosynthesis. With respect to regulation, allosterically activated by fructose-1,6-bisphosphate (F16BP) and inhibited by AMP. Its function is as follows. Involved in the biosynthesis of ADP-glucose, a building block required for the elongation reactions to produce glycogen. Catalyzes the reaction between ATP and alpha-D-glucose 1-phosphate (G1P) to produce pyrophosphate and ADP-Glc. The chain is Glucose-1-phosphate adenylyltransferase from Cronobacter sakazakii (strain ATCC BAA-894) (Enterobacter sakazakii).